A 204-amino-acid polypeptide reads, in one-letter code: UPF0301 protein Mflv_0850 (204 aa).

It belongs to the UPF0301 (AlgH) family.

The chain is UPF0301 protein Mflv_0850 from Mycolicibacterium gilvum (strain PYR-GCK) (Mycobacterium gilvum (strain PYR-GCK)).